We begin with the raw amino-acid sequence, 207 residues long: Ribosomal RNA small subunit methyltransferase G (207 aa).

S-adenosyl-L-methionine is bound by residues glycine 73, leucine 78, 124 to 125 (VE), and arginine 139.

This sequence belongs to the methyltransferase superfamily. RNA methyltransferase RsmG family.

The protein resides in the cytoplasm. It carries out the reaction guanosine(527) in 16S rRNA + S-adenosyl-L-methionine = N(7)-methylguanosine(527) in 16S rRNA + S-adenosyl-L-homocysteine. Functionally, specifically methylates the N7 position of guanine in position 527 of 16S rRNA. The chain is Ribosomal RNA small subunit methyltransferase G from Shigella dysenteriae serotype 1 (strain Sd197).